The following is a 446-amino-acid chain: Mannan endo-1,6-alpha-mannosidase DCW1 (446 aa).

The signal sequence occupies residues 1 to 18; the sequence is MRLVTLLSGLVSLVSVFG. Residues N31, N81, N106, N200, N222, N237, N262, N278, N285, N334, N391, and N397 are each glycosylated (N-linked (GlcNAc...) asparagine). The disordered stretch occupies residues 389-408; the sequence is PYNATNGGNSTGDGAAGTKP. Residue S422 is the site of GPI-anchor amidated serine attachment. A propeptide spans 423–446 (removed in mature form); that stretch reads RAGAGIITAIIGISIIACALWLVY.

This sequence belongs to the glycosyl hydrolase 76 family.

It localises to the secreted. It is found in the cell wall. The protein localises to the cell membrane. It carries out the reaction Random hydrolysis of (1-&gt;6)-alpha-D-mannosidic linkages in unbranched (1-&gt;6)-mannans.. In terms of biological role, required for normal synthesis of the cell wall. The protein is Mannan endo-1,6-alpha-mannosidase DCW1 (DCW1) of Candida glabrata (strain ATCC 2001 / BCRC 20586 / JCM 3761 / NBRC 0622 / NRRL Y-65 / CBS 138) (Yeast).